The following is a 203-amino-acid chain: Serine hydrolase-like protein (203 aa).

One can recognise an AB hydrolase-1 domain in the interval 33-145; it reads PPVLCLHGWL…FLLESDEMEN (113 aa). The active site involves S108.

The protein belongs to the AB hydrolase superfamily.

Putative serine hydrolase. The chain is Serine hydrolase-like protein (SERHL) from Homo sapiens (Human).